Reading from the N-terminus, the 134-residue chain is ATP synthase epsilon chain (134 aa).

Belongs to the ATPase epsilon chain family. In terms of assembly, F-type ATPases have 2 components, CF(1) - the catalytic core - and CF(0) - the membrane proton channel. CF(1) has five subunits: alpha(3), beta(3), gamma(1), delta(1), epsilon(1). CF(0) has three main subunits: a, b and c.

It is found in the cell membrane. Functionally, produces ATP from ADP in the presence of a proton gradient across the membrane. The chain is ATP synthase epsilon chain from Alkaliphilus oremlandii (strain OhILAs) (Clostridium oremlandii (strain OhILAs)).